The following is a 514-amino-acid chain: GMP synthase [glutamine-hydrolyzing] (514 aa).

Residues 9-199 (KIIVLDFGSQ…ALNVCGCKGD (191 aa)) form the Glutamine amidotransferase type-1 domain. Cys86 acts as the Nucleophile in catalysis. Catalysis depends on residues His173 and Glu175. Residues 200 to 389 (WTMENFSEVE…LGMPDAIVWR (190 aa)) form the GMPS ATP-PPase domain. 227–233 (SGGVDSS) serves as a coordination point for ATP.

As to quaternary structure, homodimer.

It catalyses the reaction XMP + L-glutamine + ATP + H2O = GMP + L-glutamate + AMP + diphosphate + 2 H(+). It functions in the pathway purine metabolism; GMP biosynthesis; GMP from XMP (L-Gln route): step 1/1. In terms of biological role, catalyzes the synthesis of GMP from XMP. In Listeria monocytogenes serotype 4b (strain F2365), this protein is GMP synthase [glutamine-hydrolyzing].